A 330-amino-acid chain; its full sequence is Lysophospholipase D GDPD3 (330 aa).

A topological domain (cytoplasmic) is located at residue methionine 1. Residues 2–22 (IPLLYFVLPTLGSYVMLSIFF) form a helical membrane-spanning segment. At 23–200 (LRRPHLLHTP…ANPEMPMAFT (178 aa)) the chain is on the extracellular side. The GP-PDE domain maps to 39–308 (IRLAAHRGGS…DYPTALRHYL (270 aa)). Positions 71, 73, and 86 each coordinate a divalent metal cation. A helical membrane pass occupies residues 201-221 (IWRSFWILLLYYLGLLPFVSI). The Cytoplasmic segment spans residues 222–330 (PEKFFFCFLP…EALSCLSLKK (109 aa)). The segment at 311–330 (QEEETQPPQPEALSCLSLKK) is disordered.

Belongs to the glycerophosphoryl diester phosphodiesterase family. In terms of tissue distribution, highly expressed in stomach and kidney. In stomach detected in the glandular epithelium. Predominantly expressed in the stomach (at protein level).

It localises to the membrane. The protein localises to the cytoplasm. It is found in the perinuclear region. Its subcellular location is the endoplasmic reticulum membrane. It catalyses the reaction 1-hexadecanoyl-sn-glycero-3-phosphocholine + H2O = 1-hexadecanoyl-sn-glycero-3-phosphate + choline + H(+). The catalysed reaction is 1-O-hexadecyl-sn-glycero-3-phosphocholine + H2O = 1-O-hexadecyl-sn-glycero-3-phosphate + choline + H(+). The enzyme catalyses 1-O-(1Z-octadecenyl)-sn-glycero-3-phospho-N-hexadecanoyl-ethanolamine + H2O = 1-O-(1Z-octadecenyl)-sn-glycero-3-phosphate + N-hexadecanoylethanolamine + H(+). It carries out the reaction N-(5Z,8Z,11Z,14Z-eicosatetraenoyl)-1-(9Z-octadecenoyl)-sn-glycero-3-phosphoethanolamine + H2O = N-(5Z,8Z,11Z,14Z-eicosatetraenoyl)-ethanolamine + 1-(9Z-octadecenoyl)-sn-glycero-3-phosphate + H(+). It catalyses the reaction N,1-di-(9Z-octadecenoyl)-sn-glycero-3-phosphoethanolamine + H2O = N-(9Z-octadecenoyl) ethanolamine + 1-(9Z-octadecenoyl)-sn-glycero-3-phosphate + H(+). The catalysed reaction is N-hexadecanoyl-1-(9Z-octadecenoyl)-sn-glycero-3-phosphoethanolamine + H2O = N-hexadecanoylethanolamine + 1-(9Z-octadecenoyl)-sn-glycero-3-phosphate + H(+). The enzyme catalyses 1-hexadecanoyl-sn-glycero-3-phosphocholine + H2O = sn-glycerol 3-phosphocholine + hexadecanoate + H(+). Its activity is regulated as follows. Lysophospholipase D activity is stimulated by calcium. Loss of lysophospholipase D activity in presence of EDTA. Hydrolyzes lysoglycerophospholipids to produce lysophosphatidic acid (LPA) and the corresponding amines. Shows a preference for 1-O-alkyl-sn-glycero-3-phosphocholine (lyso-PAF), lysophosphatidylcholine (lyso-PC) and N-acylethanolamine lysophospholipids. Does not display glycerophosphodiester phosphodiesterase activity, since it cannot hydrolyze either glycerophosphoinositol or glycerophosphocholine. The protein is Lysophospholipase D GDPD3 of Mus musculus (Mouse).